The primary structure comprises 549 residues: CTP synthase (549 aa).

An amidoligase domain region spans residues 1–267 (MAKFVFITGG…CREVLDVLQL (267 aa)). Residue Ser13 participates in CTP binding. Ser13 lines the UTP pocket. Residues 14-19 (SIGKGI) and Asp71 each bind ATP. 2 residues coordinate Mg(2+): Asp71 and Glu141. CTP is bound by residues 148–150 (DIE), 188–193 (KTKPTQ), and Lys224. UTP is bound by residues 188–193 (KTKPTQ) and Lys224. The region spanning 292-534 (KVALVGKYVQ…IEAAQQRLPD (243 aa)) is the Glutamine amidotransferase type-1 domain. Residue Gly354 participates in L-glutamine binding. Cys381 functions as the Nucleophile; for glutamine hydrolysis in the catalytic mechanism. Residues 382–385 (LGMQ), Glu405, and Arg462 contribute to the L-glutamine site. Residues His507 and Glu509 contribute to the active site.

It belongs to the CTP synthase family. Homotetramer.

The catalysed reaction is UTP + L-glutamine + ATP + H2O = CTP + L-glutamate + ADP + phosphate + 2 H(+). It catalyses the reaction L-glutamine + H2O = L-glutamate + NH4(+). The enzyme catalyses UTP + NH4(+) + ATP = CTP + ADP + phosphate + 2 H(+). Its pathway is pyrimidine metabolism; CTP biosynthesis via de novo pathway; CTP from UDP: step 2/2. Allosterically activated by GTP, when glutamine is the substrate; GTP has no effect on the reaction when ammonia is the substrate. The allosteric effector GTP functions by stabilizing the protein conformation that binds the tetrahedral intermediate(s) formed during glutamine hydrolysis. Inhibited by the product CTP, via allosteric rather than competitive inhibition. Catalyzes the ATP-dependent amination of UTP to CTP with either L-glutamine or ammonia as the source of nitrogen. Regulates intracellular CTP levels through interactions with the four ribonucleotide triphosphates. In Synechococcus sp. (strain CC9902), this protein is CTP synthase.